Consider the following 157-residue polypeptide: Transcription elongation factor GreA (157 aa).

Residues methionine 1–valine 75 are a coiled coil.

This sequence belongs to the GreA/GreB family.

Necessary for efficient RNA polymerase transcription elongation past template-encoded arresting sites. The arresting sites in DNA have the property of trapping a certain fraction of elongating RNA polymerases that pass through, resulting in locked ternary complexes. Cleavage of the nascent transcript by cleavage factors such as GreA or GreB allows the resumption of elongation from the new 3'terminus. GreA releases sequences of 2 to 3 nucleotides. This chain is Transcription elongation factor GreA, found in Mycoplasma capricolum subsp. capricolum (strain California kid / ATCC 27343 / NCTC 10154).